We begin with the raw amino-acid sequence, 260 residues long: Hydroxyethylthiazole kinase 1 (260 aa).

Methionine 39 is a binding site for substrate. Residues arginine 115 and threonine 160 each coordinate ATP. Glycine 187 provides a ligand contact to substrate.

Belongs to the Thz kinase family. Mg(2+) is required as a cofactor.

It catalyses the reaction 5-(2-hydroxyethyl)-4-methylthiazole + ATP = 4-methyl-5-(2-phosphooxyethyl)-thiazole + ADP + H(+). The protein operates within cofactor biosynthesis; thiamine diphosphate biosynthesis; 4-methyl-5-(2-phosphoethyl)-thiazole from 5-(2-hydroxyethyl)-4-methylthiazole: step 1/1. Its function is as follows. Catalyzes the phosphorylation of the hydroxyl group of 4-methyl-5-beta-hydroxyethylthiazole (THZ). The chain is Hydroxyethylthiazole kinase 1 from Streptococcus pneumoniae (strain JJA).